The following is a 473-amino-acid chain: Glutamate--tRNA ligase 1 (473 aa).

The 'HIGH' region signature appears at 23-33 (PSPTGLLHVGG). The 'KMSKS' region motif lies at 252–256 (KLSKR). Lys255 is an ATP binding site.

Belongs to the class-I aminoacyl-tRNA synthetase family. Glutamate--tRNA ligase type 1 subfamily. Monomer.

The protein localises to the cytoplasm. The catalysed reaction is tRNA(Glu) + L-glutamate + ATP = L-glutamyl-tRNA(Glu) + AMP + diphosphate. Functionally, catalyzes the attachment of glutamate to tRNA(Glu) in a two-step reaction: glutamate is first activated by ATP to form Glu-AMP and then transferred to the acceptor end of tRNA(Glu). The chain is Glutamate--tRNA ligase 1 from Granulibacter bethesdensis (strain ATCC BAA-1260 / CGDNIH1).